The following is a 1284-amino-acid chain: MKSTAESKETPSQDESTTSVPCTEAPLVEEGEEASFGAYKRIFTFAGRTELILQAVAILAACASGAGIALQNLIFGQFVTVITDFTNGISTPADFRDNAAELALYFVYLGIARLVLSYTYNTLLTYAAYRIVRNIRHAYLKAALSQEVAYYDFGSGGSIAAQATSNGKLIQAGASDKIGLLFQGLAAFVTLSLSRLWCKWKLTLICICIPVATIGTTGVVAAVEAGHETRILQIHAQANSFAEGILAGVKAVHAFGMRDSLVRKFDEYLVEAHKVGKKISPLLGLLFSAEYTIIYLGYGLAFWQGIHMFGRGEIGTAGDIFTVLLSVVIASINLTLLAPYSIEFSRAASAAAQLFRLIDRESEINPYGKEGLEPERVLGDVELENVTFSYPTRPGITVLDNFSLKVPAGKVTALVGQSGSGKSTIVGLLERWYNPTSGAIRLDGNLISELNVGWLRRNVRLVQQEPVLFQGSVFDNIRYGLVGTPWENASREEQMERVQEAAKLAYAHEFISELTDGYDTLIGERGGLLSGGQKQRVAIARSVVSQPKVLLLDEATSALDPHAETIVQKALDKAAEGRTTIVIAHKLATIRKADNIVVMSKGHIVEQGTHESLIAKDGVYAGLVKIQNLAVNASAHDNVNEEGEGEDVALLEVTETAVTRYPTSIRGRMNSIKDRDDYENHKHMDMLAALAYLVRECPELKWAYLVVLLGCLGGCAMYPGQAILMSRVVEVFTLSGDAMLDKGDFYASMLIVLAAGCLICYLAVGYATNTIAQHLSHWFRRLILHDMLRQDIQFFDREENTTGALVSRIDSYPHAILELMGYNIALVVIAVLQVVTCGILAIAFSWKLGLVVVFGGIPPLVGAGMVRIRVDSRLDRQTSKKYGTSSSIASEAVNAIRTVSSLAIEETVLRRYTEELDHAVSSSVKPMAATMICFGLTQCIEYWFQALGFWYGCRLVSLGETSMYSFFVAFLSVFFAGQASAQLFQWSTSITKGINATNYIAWLHQLQPTVRETPENHDKGPGSGAPIAMDNVRFSYPLRPDAPILKGVNLKINKGQFIAFVGSSGCGKSTMIAMLERFYDPTTGSITIDASTLTDINPISYRNIVALVQQEPTLFQGTIRDNISLGVFNPNTQPFFSDKDAVKSVSDEQIESALRAANAWDFVSSLPQGIYTPAGSGGSQLSGGQRQRIAIARALIRDPKILLLDEATSALDTESEKIVQKALEGAARDGDRLTVAVAHRLSTIKDANVICVFFGGKIAEMGTHQELIVRGGLYRRMCEAQALD.

Over residues 1–11 (MKSTAESKETP) the composition is skewed to basic and acidic residues. Positions 1–24 (MKSTAESKETPSQDESTTSVPCTE) are disordered. Helical transmembrane passes span 55 to 75 (AVAI…NLIF), 99 to 119 (AAEL…LSYT), 178 to 198 (IGLL…RLWC), 203 to 223 (TLIC…VAAV), 282 to 302 (LLGL…GLAF), and 320 to 340 (IFTV…LAPY). An ABC transmembrane type-1 1 domain is found at 55 to 346 (AVAILAACAS…LAPYSIEFSR (292 aa)). One can recognise an ABC transporter 1 domain in the interval 381–626 (VELENVTFSY…DGVYAGLVKI (246 aa)). N-linked (GlcNAc...) asparagine glycosylation is found at Asn-385 and Asn-401. Position 416-423 (416-423 (GQSGSGKS)) interacts with ATP. N-linked (GlcNAc...) asparagine glycosylation is found at Asn-488 and Asn-632. 2 helical membrane-spanning segments follow: residues 705 to 725 (LVVL…AILM) and 745 to 765 (FYAS…LAVG). The region spanning 705-992 (LVVLLGCLGG…LFQWSTSITK (288 aa)) is the ABC transmembrane type-1 2 domain. A glycan (N-linked (GlcNAc...) asparagine) is linked at Asn-800. A run of 4 helical transmembrane segments spans residues 824-844 (IALV…AIAF), 846-866 (WKLG…AGMV), 931-951 (MICF…GFWY), and 955-975 (LVSL…SVFF). Asn-995 carries an N-linked (GlcNAc...) asparagine glycan. Residues 1027-1280 (IAMDNVRFSY…GGLYRRMCEA (254 aa)) enclose the ABC transporter 2 domain. ATP is bound at residue 1062–1069 (GSSGCGKS). Residue Asn-1122 is glycosylated (N-linked (GlcNAc...) asparagine).

It belongs to the ABC transporter superfamily. ABCB family. Multidrug resistance exporter (TC 3.A.1.201) subfamily.

The protein resides in the cell membrane. Its function is as follows. Pleiotropic ABC efflux transporter involved in the protection of the cells against a wide range of toxic compounds. The sequence is that of ABC multidrug transporter atrC from Emericella nidulans (Aspergillus nidulans).